Reading from the N-terminus, the 680-residue chain is Methionine--tRNA ligase (680 aa).

The 'HIGH' region signature appears at 15–25 (PYANGPVHIGH). Cys147, Cys150, Cys160, and Cys163 together coordinate Zn(2+). A 'KMSKS' region motif is present at residues 332–336 (KISTS). Thr335 is a binding site for ATP. In terms of domain architecture, tRNA-binding spans 579-680 (DFLKLDIRVG…AEVAAGSQVK (102 aa)).

The protein belongs to the class-I aminoacyl-tRNA synthetase family. MetG type 1 subfamily. Homodimer. Requires Zn(2+) as cofactor.

The protein resides in the cytoplasm. It carries out the reaction tRNA(Met) + L-methionine + ATP = L-methionyl-tRNA(Met) + AMP + diphosphate. In terms of biological role, is required not only for elongation of protein synthesis but also for the initiation of all mRNA translation through initiator tRNA(fMet) aminoacylation. The polypeptide is Methionine--tRNA ligase (Porphyromonas gingivalis (strain ATCC BAA-308 / W83)).